A 274-amino-acid polypeptide reads, in one-letter code: Endonuclease 8-like L720 (274 aa).

An FPG-type; degenerate zinc finger spans residues 241 to 274 (RIYRKSLCPLGHKTIRKKIGLRNRMTTWCPVCQL).

Belongs to the FPG family.

This Acanthamoeba polyphaga mimivirus (APMV) protein is Endonuclease 8-like L720.